The following is a 428-amino-acid chain: Enolase (428 aa).

Glutamine 163 contributes to the (2R)-2-phosphoglycerate binding site. The active-site Proton donor is glutamate 205. Mg(2+) is bound by residues aspartate 242, glutamate 286, and aspartate 313. (2R)-2-phosphoglycerate-binding residues include lysine 338, arginine 367, serine 368, and lysine 389. The Proton acceptor role is filled by lysine 338.

Belongs to the enolase family. Mg(2+) is required as a cofactor.

The protein localises to the cytoplasm. It is found in the secreted. Its subcellular location is the cell surface. It catalyses the reaction (2R)-2-phosphoglycerate = phosphoenolpyruvate + H2O. Its pathway is carbohydrate degradation; glycolysis; pyruvate from D-glyceraldehyde 3-phosphate: step 4/5. In terms of biological role, catalyzes the reversible conversion of 2-phosphoglycerate (2-PG) into phosphoenolpyruvate (PEP). It is essential for the degradation of carbohydrates via glycolysis. In Acidovorax ebreus (strain TPSY) (Diaphorobacter sp. (strain TPSY)), this protein is Enolase.